A 289-amino-acid chain; its full sequence is tRNA dimethylallyltransferase (289 aa).

9–16 (GTTASGKT) is a binding site for ATP. 11–16 (TASGKT) provides a ligand contact to substrate. The segment at 34-37 (DSLC) is interaction with substrate tRNA.

The protein belongs to the IPP transferase family. Monomer. It depends on Mg(2+) as a cofactor.

It carries out the reaction adenosine(37) in tRNA + dimethylallyl diphosphate = N(6)-dimethylallyladenosine(37) in tRNA + diphosphate. Functionally, catalyzes the transfer of a dimethylallyl group onto the adenine at position 37 in tRNAs that read codons beginning with uridine, leading to the formation of N6-(dimethylallyl)adenosine (i(6)A). This chain is tRNA dimethylallyltransferase, found in Campylobacter jejuni subsp. jejuni serotype O:23/36 (strain 81-176).